A 446-amino-acid polypeptide reads, in one-letter code: Deoxyguanosinetriphosphate triphosphohydrolase-like protein (446 aa).

The segment at methionine 1–aspartate 28 is disordered. The segment covering glutamine 7–aspartate 28 has biased composition (basic and acidic residues). One can recognise an HD domain in the interval arginine 59–alanine 252.

This sequence belongs to the dGTPase family. Type 2 subfamily.

The polypeptide is Deoxyguanosinetriphosphate triphosphohydrolase-like protein (Shewanella sp. (strain ANA-3)).